The sequence spans 405 residues: Neisseria adhesin A (405 aa).

Residues 1-23 (MKHFPSKVLTTAILATFCSGALA) form the signal peptide. Residues 24–87 (ATNDDDVKKA…ADDFKGLGLK (64 aa)) are head domain. Coiled-coil stretches lie at residues 87-170 (KKVV…KLEA) and 181-329 (AFND…LRKE). Residues 88–350 (KVVTNLTKTV…SGLFQPYNVG (263 aa)) form a coiled stalk domain region. The segment at 312–350 (HDTRLNGLDKTVSDLRKETRQGLAEQAALSGLFQPYNVG) is outer membrane translocation of the passenger domain. The next 4 membrane-spanning stretches (beta stranded) occupy residues 350 to 360 (GRFNVTAAVGG), 364 to 375 (ESAVAIGTGFRF), 382 to 388 (KAGVAVG), and 394 to 405 (SAAYHVGVNYEW). Residues 351-405 (RFNVTAAVGGYKSESAVAIGTGFRFTENFAAKAGVAVGTSSGSSAAYHVGVNYEW) are translocator domain.

This sequence belongs to the autotransporter-2 (AT-2) (TC 1.B.40) family. In terms of assembly, the non-membrane anchored protein (residues 24-350) probably forms a homotrimer; it is assumed the mature protein forms trimers in situ. The mature protein without the membrane-targeting segment (residues 24-350) binds to human heat shock 90 beta protein (HSP90AB1) both in vitro and when incubated with human monocytes. A subsequent paper showed binding of the same fragment in epithelial cells to both HSP90AA1 and HSP90AB1; in vitro the interaction is stabilized by ADP and the Hsp90 inhibitor 17-AAG (17-N-allylamino-17-demethoxygeldanamycin), in vitro and in vivo both interactions are inhibited by ATP. Binds human oxidized low-density lipoprotein receptor 1 (LOX-1, OLR1) in protein microarrays, in solution and when LOX-1 is expressed on the cell surface. Binds via the head and the beginning of the coiled stalk (residues 24-170); binding can be abrogated by monoclonal antibodies against those specific regions of NadA. Other potential binding partners were identified but not characterized in the same study. Forms high molecular weight oligomers in whole cell extracts that are not disrupted by boiling in SDS buffer.

It is found in the cell outer membrane. Its subcellular location is the cell surface. In terms of biological role, adheres to and induces bacterial uptake by human epithelial cells in a microfilament-dependent process. Binding is reduced by pronase treatment, suggesting there is a protein receptor on the human cells. Possible human protein receptors include integrin beta-1 (ITGB1) and oxidized low-density lipoprotein receptor 1 (OLR1). Binds to extracellular human Hsp90 (preferentially the beta isoform, HSP90AB1) on monocytes, binding stimulates monocytes in a TLR4-dependent fashion, polymixin B, which binds NadA, blocks the activation. Hsp90 is probably not the first receptor on human monocytes. Non-membrane anchored protein (residues 24-350) is internalized into human epithelial cells by hijacking the endosome recycling pathway and may be recycled back to the cell surface, which might aid transcellular trafficking of the bacteria. A bacterial cell surface protein; antisera against this protein induce complement-mediated killing of this and other strains. The chain is Neisseria adhesin A from Neisseria meningitidis serogroup B.